The sequence spans 120 residues: Ribosomal protein eL22-like 1 (120 aa).

The protein belongs to the eukaryotic ribosomal protein eL22 family.

The protein is Ribosomal protein eL22-like 1 (rpl22l1) of Xenopus tropicalis (Western clawed frog).